The following is a 169-amino-acid chain: ATP synthase subunit b (169 aa).

Residues 3-23 (IKILLLVLPFFAFASEHGGVN) traverse the membrane as a helical segment.

This sequence belongs to the ATPase B chain family. As to quaternary structure, F-type ATPases have 2 components, F(1) - the catalytic core - and F(0) - the membrane proton channel. F(1) has five subunits: alpha(3), beta(3), gamma(1), delta(1), epsilon(1). F(0) has three main subunits: a(1), b(2) and c(10-14). The alpha and beta chains form an alternating ring which encloses part of the gamma chain. F(1) is attached to F(0) by a central stalk formed by the gamma and epsilon chains, while a peripheral stalk is formed by the delta and b chains.

Its subcellular location is the cell inner membrane. In terms of biological role, f(1)F(0) ATP synthase produces ATP from ADP in the presence of a proton or sodium gradient. F-type ATPases consist of two structural domains, F(1) containing the extramembraneous catalytic core and F(0) containing the membrane proton channel, linked together by a central stalk and a peripheral stalk. During catalysis, ATP synthesis in the catalytic domain of F(1) is coupled via a rotary mechanism of the central stalk subunits to proton translocation. Functionally, component of the F(0) channel, it forms part of the peripheral stalk, linking F(1) to F(0). The sequence is that of ATP synthase subunit b from Campylobacter curvus (strain 525.92).